The chain runs to 300 residues: MFRNVKELIEITKEKQILISDVMIAQEMEVTEKTKEDIFQQMDHNLSVMEAAVQKGLEGVTSQTGLTGGDAVKLQAYIRSGKSLSGPLILDAVSKAVATNEVNAAMGTICATPTAGSAGVVPGTLFAVKEKLNPTREQMIRFLFTAGAFGFVVANNASISGAAGGCQAEVGSASGMAAAAIVEMAGGTPEQSAEAMAITLKNMLGLVCDPVAGLVEVPCVKRNAMGASNAMIAADMALAGITSRIPCDEVIDAMYKIGQTMPTALRETGQGGLAATPTGRELEKKIFGGALGSRETTSAN.

It belongs to the iron-sulfur dependent L-serine dehydratase family. In terms of assembly, heterodimer of an alpha chain and a beta chain. The cofactor is [4Fe-4S] cluster.

It catalyses the reaction L-serine = pyruvate + NH4(+). It participates in carbohydrate biosynthesis; gluconeogenesis. In Bacillus subtilis (strain 168), this protein is Probable L-serine dehydratase, alpha chain (sdaAA).